Here is a 654-residue protein sequence, read N- to C-terminus: Endoplasmic reticulum chaperone BiP (654 aa).

Positions 1 to 18 (MKLSLVAAMLLLLSAARA) are cleaved as a signal peptide. The segment at 1–80 (MKLSLVAAML…EGERLIGDAA (80 aa)) is required for interaction with ELAPOR1. 36 to 39 (GTTY) contributes to the ATP binding site. Ser86 is modified (phosphoserine). Position 96 (Lys96) interacts with ATP. N6-acetyllysine is present on Lys125. The segment at 125 to 280 (KPYIQVDIGG…KKKTGKDVRK (156 aa)) is nucleotide-binding (NBD). The residue at position 160 (Tyr160) is a 3'-nitrotyrosine. Lys213 carries the N6-acetyllysine modification. 227-229 (GGT) is a binding site for ATP. Lys271 is subject to N6-acetyllysine. ATP is bound at residue 293–300 (EKAKRALS). The residue at position 326 (Lys326) is an N6-acetyllysine. Lys352 is covalently cross-linked (Glycyl lysine isopeptide (Lys-Gly) (interchain with G-Cter in SUMO2)). Lys353 is modified (N6-acetyllysine; alternate). Lys353 is covalently cross-linked (Glycyl lysine isopeptide (Lys-Gly) (interchain with G-Cter in SUMO1); alternate). 364 to 367 (GSTR) serves as a coordination point for ATP. The segment at 409–419 (QDTGDLVLLDV) is interdomain linker. The tract at residues 420 to 500 (CPLTLGIETV…PRGVPQIEVT (81 aa)) is substrate-binding (SBD). Lys447 bears the N6-succinyllysine mark. The residue at position 492 (Arg492) is an Omega-N-methylarginine. Thr518 bears the O-AMP-threonine; alternate mark. The residue at position 518 (Thr518) is a Phosphothreonine; alternate. Lys585 is subject to N6,N6,N6-trimethyllysine; by METTL21A; in vitro. Lys585 is subject to N6,N6-dimethyllysine; alternate. Lys585 carries the post-translational modification N6-methyllysine; alternate. Lys591 bears the N6-methyllysine mark. Positions 633-654 (KLYGSAGPPPTGEEDTAEKDEL) are disordered. Thr643 and Thr648 each carry phosphothreonine. A compositionally biased stretch (acidic residues) spans 644–654 (GEEDTAEKDEL). The Prevents secretion from ER motif lies at 651 to 654 (KDEL).

The protein belongs to the heat shock protein 70 family. As to quaternary structure, monomer and homooligomer; homooligomerization via the interdomain linker inactivates the chaperone activity and acts as a storage of HSPA5/BiP molecules. Interacts with DNAJC1 (via J domain). Component of an EIF2 complex at least composed of CELF1/CUGBP1, CALR, CALR3, EIF2S1, EIF2S2, HSP90B1 and HSPA5. Part of a large chaperone multiprotein complex comprising DNAJB11, HSP90B1, HSPA5, HYOU, PDIA2, PDIA4, PDIA6, PPIB, SDF2L1, UGGT1 and very small amounts of ERP29, but not, or at very low levels, CALR nor CANX. Interacts with TMEM132A and TRIM21. May form a complex with ERLEC1, OS9, SEL1L and SYVN1. Interacts with DNAJC10. Interacts with DNAJB9/ERdj4; leading to recruit HSPA5/BiP to ERN1/IRE1. Interacts with ERN1/IRE1 (via luminal domain); the interaction takes place following interaction with DNAJB9/ERdj4 and leads to inactivate ERN1/IRE1, the interaction also competitively inhibits ERN1 interaction with MANF. Interacts directly with MANF (via SAP domain); the interaction inhibits ATP binding to HSPA5/BiP and subsequent nucleotide exchange. Interacts with EIF2AK3/PERK (via luminal domain); interaction leads to inactivate EIF2AK3/PERK. Interacts with MX1. Interacts with METTL23. Interacts with CEMIP; the interaction induces calcium leakage from the endoplasmic reticulum and cell migration. Interacts with PCSK4 form; the interaction takes place in the endoplasmic reticulum. Interacts with CIPC. Interacts with CCDC88B (via C-terminus); the interaction opposes ERN1-mediated JNK activation, protecting against apoptosis. Interacts with INPP5K; necessary for INPP5K localization at the endoplasmic reticulum. Interacts with MANF; the interaction is direct. Interacts with LOXL2; leading to activate the ERN1/IRE1-XBP1 pathway of the unfolded protein response. Interacts with CLU under stressed condition; interaction increases CLU protein stability; facilitates its retrotranslocation and redistribution to the mitochondria; cooperatively suppress stress-induced apoptosis by stabilizing mitochondrial membrane integrity. Interacts with CCDC47. Interacts with CLN3. Interacts with ELAPOR1; may regulate the function of HSPA5 in apoptosis and cell proliferation. Interacts with CASP7. Interacts with ILDR2; the interaction stabilizes ILDR2 expression. Interacts with ADAM7. In terms of assembly, (Microbial infection) Interacts with Japanese encephalitis virus envelope protein E. (Microbial infection) Interacts with R.delemar invasin CotH3 on the surface of nasal epithelial cells. Interacts with R.delemar invasin CotH2. As to quaternary structure, (Microbial infection) Interacts with Zika virus envelope protein E and non-structural protein 1 in a chaperone-client manner. In terms of processing, AMPylated by FICD. In unstressed cells, AMPylation at Thr-518 by FICD inactivates the chaperome activity: AMPylated form is locked in a relatively inert state and only weakly stimulated by J domain-containing proteins. In response to endoplasmic reticulum stress, de-AMPylation by the same protein, FICD, restores the chaperone activity.

Its subcellular location is the endoplasmic reticulum lumen. The protein localises to the melanosome. It is found in the cytoplasm. It localises to the cell surface. It carries out the reaction ATP + H2O = ADP + phosphate + H(+). With respect to regulation, the chaperone activity is regulated by ATP-induced allosteric coupling of the nucleotide-binding (NBD) and substrate-binding (SBD) domains. In the ADP-bound and nucleotide-free (apo) states, the two domains have little interaction. In contrast, in the ATP-bound state the two domains are tightly coupled, which results in drastically accelerated kinetics in both binding and release of polypeptide substrates. J domain-containing co-chaperones (DNAJB9/ERdj4 or DNAJC10/ERdj5) stimulate the ATPase activity and are required for efficient substrate recognition by HSPA5/BiP. Homooligomerization inactivates participating HSPA5/BiP protomers and probably act as reservoirs to store HSPA5/BiP molecules when they are not needed by the cell. In terms of biological role, endoplasmic reticulum chaperone that plays a key role in protein folding and quality control in the endoplasmic reticulum lumen. Involved in the correct folding of proteins and degradation of misfolded proteins via its interaction with DNAJC10/ERdj5, probably to facilitate the release of DNAJC10/ERdj5 from its substrate. Acts as a key repressor of the EIF2AK3/PERK and ERN1/IRE1-mediated unfolded protein response (UPR). In the unstressed endoplasmic reticulum, recruited by DNAJB9/ERdj4 to the luminal region of ERN1/IRE1, leading to disrupt the dimerization of ERN1/IRE1, thereby inactivating ERN1/IRE1. Also binds and inactivates EIF2AK3/PERK in unstressed cells. Accumulation of misfolded protein in the endoplasmic reticulum causes release of HSPA5/BiP from ERN1/IRE1 and EIF2AK3/PERK, allowing their homodimerization and subsequent activation. Plays an auxiliary role in post-translational transport of small presecretory proteins across endoplasmic reticulum (ER). May function as an allosteric modulator for SEC61 channel-forming translocon complex, likely cooperating with SEC62 to enable the productive insertion of these precursors into SEC61 channel. Appears to specifically regulate translocation of precursors having inhibitory residues in their mature region that weaken channel gating. May also play a role in apoptosis and cell proliferation. Functionally, (Microbial infection) Plays an important role in viral binding to the host cell membrane and entry for several flaviruses such as Dengue virus, Zika virus and Japanese encephalitis virus. Acts as a component of the cellular receptor for Dengue virus serotype 2/DENV-2 on human liver cells. (Microbial infection) Acts as a receptor for CotH proteins expressed by fungi of the order mucorales, the causative agent of mucormycosis, which plays an important role in epithelial cell invasion by the fungi. Acts as a receptor for R.delemar CotH3 in nasal epithelial cells, which may be an early step in rhinoorbital/cerebral mucormycosis (RCM) disease progression. The sequence is that of Endoplasmic reticulum chaperone BiP from Homo sapiens (Human).